A 491-amino-acid chain; its full sequence is Ketol-acid reductoisomerase (NADP(+)) (491 aa).

The 194-residue stretch at 15-208 (AQLGKCRFMG…GGHRAGVLES (194 aa)) folds into the KARI N-terminal Rossmann domain. Residues 45–48 (CGAQ), R68, R76, S78, and 108–110 (DKQ) each bind NADP(+). The active site involves H132. G158 provides a ligand contact to NADP(+). 2 consecutive KARI C-terminal knotted domains span residues 209–344 (SFVA…TAPQ) and 345–484 (YEGK…MTDM). The Mg(2+) site is built by D217, E221, E389, and E393. S414 lines the substrate pocket.

Belongs to the ketol-acid reductoisomerase family. Requires Mg(2+) as cofactor.

The catalysed reaction is (2R)-2,3-dihydroxy-3-methylbutanoate + NADP(+) = (2S)-2-acetolactate + NADPH + H(+). The enzyme catalyses (2R,3R)-2,3-dihydroxy-3-methylpentanoate + NADP(+) = (S)-2-ethyl-2-hydroxy-3-oxobutanoate + NADPH + H(+). Its pathway is amino-acid biosynthesis; L-isoleucine biosynthesis; L-isoleucine from 2-oxobutanoate: step 2/4. It functions in the pathway amino-acid biosynthesis; L-valine biosynthesis; L-valine from pyruvate: step 2/4. In terms of biological role, involved in the biosynthesis of branched-chain amino acids (BCAA). Catalyzes an alkyl-migration followed by a ketol-acid reduction of (S)-2-acetolactate (S2AL) to yield (R)-2,3-dihydroxy-isovalerate. In the isomerase reaction, S2AL is rearranged via a Mg-dependent methyl migration to produce 3-hydroxy-3-methyl-2-ketobutyrate (HMKB). In the reductase reaction, this 2-ketoacid undergoes a metal-dependent reduction by NADPH to yield (R)-2,3-dihydroxy-isovalerate. This Escherichia coli O7:K1 (strain IAI39 / ExPEC) protein is Ketol-acid reductoisomerase (NADP(+)).